The sequence spans 78 residues: MKTLLLTLVVVTIVCLDFGYTIVCYKRHASDSQTTTCLSGICYKKITRGSSRPEMGCGCPQSSRGVKVDCCMRDKCNG.

Residues 1-21 (MKTLLLTLVVVTIVCLDFGYT) form the signal peptide. Disulfide bonds link Cys-24–Cys-42, Cys-37–Cys-57, Cys-59–Cys-70, and Cys-71–Cys-76.

It belongs to the three-finger toxin family. Short-chain subfamily. Orphan group XII sub-subfamily. Expressed by the venom gland.

The protein localises to the secreted. This chain is Alpha-neurotoxin homolog 7, found in Micrurus corallinus (Brazilian coral snake).